A 449-amino-acid polypeptide reads, in one-letter code: Tubulin alpha chain (449 aa).

Residues Gln-11, Glu-71, Ser-140, Gly-144, Thr-145, Thr-179, Asn-206, and Asn-228 each coordinate GTP. Glu-71 serves as a coordination point for Mg(2+). Glu-254 is an active-site residue.

Belongs to the tubulin family. Dimer of alpha and beta chains. A typical microtubule is a hollow water-filled tube with an outer diameter of 25 nm and an inner diameter of 15 nM. Alpha-beta heterodimers associate head-to-tail to form protofilaments running lengthwise along the microtubule wall with the beta-tubulin subunit facing the microtubule plus end conferring a structural polarity. Microtubules usually have 13 protofilaments but different protofilament numbers can be found in some organisms and specialized cells. The cofactor is Mg(2+).

The protein localises to the cytoplasm. It is found in the cytoskeleton. It carries out the reaction GTP + H2O = GDP + phosphate + H(+). Functionally, tubulin is the major constituent of microtubules, a cylinder consisting of laterally associated linear protofilaments composed of alpha- and beta-tubulin heterodimers. Microtubules grow by the addition of GTP-tubulin dimers to the microtubule end, where a stabilizing cap forms. Below the cap, tubulin dimers are in GDP-bound state, owing to GTPase activity of alpha-tubulin. The chain is Tubulin alpha chain (TUBA) from Sordaria macrospora (strain ATCC MYA-333 / DSM 997 / K(L3346) / K-hell).